Reading from the N-terminus, the 212-residue chain is High frequency lysogenization protein HflD homolog (212 aa).

A coiled-coil region spans residues 92-128; the sequence is LIALERKLNAKSAALDELGKRIGQLERQLEHFELLSE.

It belongs to the HflD family.

It is found in the cytoplasm. The protein resides in the cell inner membrane. This Pectobacterium atrosepticum (strain SCRI 1043 / ATCC BAA-672) (Erwinia carotovora subsp. atroseptica) protein is High frequency lysogenization protein HflD homolog.